A 367-amino-acid chain; its full sequence is Dimethyladenosine transferase 1, mitochondrial (367 aa).

The N-terminal 16 residues, 1 to 16 (MASASRLPPLPALRDF), are a transit peptide targeting the mitochondrion. S-adenosyl-L-methionine is bound by residues 30–33 (QNYL), Asn31, Leu33, Gly58, Glu80, Asp106, and Asn141.

The protein belongs to the class I-like SAM-binding methyltransferase superfamily. rRNA adenine N(6)-methyltransferase family. KsgA subfamily.

The protein resides in the mitochondrion. In terms of biological role, probable S-adenosyl-L-methionine-dependent methyltransferase which specifically dimethylates mitochondrial 12S rRNA at the conserved stem loop. Also required for basal transcription of mitochondrial DNA. Stimulates transcription independently of the methyltransferase activity. This Caenorhabditis elegans protein is Dimethyladenosine transferase 1, mitochondrial (tfbm-1).